Consider the following 370-residue polypeptide: D-alanine--D-alanine ligase (370 aa).

The ATP-grasp domain maps to 144-352; sequence KKIFADAGIP…YGALIERLVD (209 aa). 177–232 is an ATP binding site; it reads EEVLTYPVFVKPANLGSSVGISKATNKKELVDAMTEAFLYDRRVVVEQGVVAREIE. 3 residues coordinate Mg(2+): Asp306, Glu319, and Asn321.

The protein belongs to the D-alanine--D-alanine ligase family. Mg(2+) is required as a cofactor. Requires Mn(2+) as cofactor.

The protein localises to the cytoplasm. It catalyses the reaction 2 D-alanine + ATP = D-alanyl-D-alanine + ADP + phosphate + H(+). Its pathway is cell wall biogenesis; peptidoglycan biosynthesis. In terms of biological role, cell wall formation. This is D-alanine--D-alanine ligase from Listeria monocytogenes serovar 1/2a (strain ATCC BAA-679 / EGD-e).